Reading from the N-terminus, the 258-residue chain is tRNA pseudouridine synthase A (258 aa).

Catalysis depends on Asp-53, which acts as the Nucleophile. Tyr-111 is a binding site for substrate.

This sequence belongs to the tRNA pseudouridine synthase TruA family. In terms of assembly, homodimer.

The catalysed reaction is uridine(38/39/40) in tRNA = pseudouridine(38/39/40) in tRNA. Its function is as follows. Formation of pseudouridine at positions 38, 39 and 40 in the anticodon stem and loop of transfer RNAs. In Streptococcus agalactiae serotype III (strain NEM316), this protein is tRNA pseudouridine synthase A.